Reading from the N-terminus, the 358-residue chain is Gibberellin 2-beta-dioxygenase 6 (358 aa).

The 102-residue stretch at 207–308 (DETTCFLRLN…RLSVAYFLCP (102 aa)) folds into the Fe2OG dioxygenase domain. Tyr218 is a binding site for 2-oxoglutarate. The Fe cation site is built by His233, Asp235, and His289. 2-oxoglutarate contacts are provided by Arg299 and Ser301.

Belongs to the iron/ascorbate-dependent oxidoreductase family. GA2OX subfamily. It depends on L-ascorbate as a cofactor. The cofactor is Fe(2+). In terms of tissue distribution, expressed in panicles. Expressed at low levels in young shoots, leaf blades and elongating internodes.

It localises to the cytoplasm. The protein localises to the nucleus. The catalysed reaction is gibberellin A1 + 2-oxoglutarate + O2 = gibberellin A8 + succinate + CO2. Its function is as follows. Catalyzes the 2-beta-hydroxylation of several biologically active gibberellins, leading to the homeostatic regulation of their endogenous level. Catabolism of gibberellins (GAs) plays a central role in plant development. In vitro, converts GA12 and GA53 to the corresponding 2-beta-hydroxylated products GA110 and GA97, respectively. This Oryza sativa subsp. japonica (Rice) protein is Gibberellin 2-beta-dioxygenase 6.